The following is a 363-amino-acid chain: 3-dehydroquinate synthase (363 aa).

Residues 74 to 79 (DGEQYK), 108 to 112 (GVIGD), 132 to 133 (TT), Lys145, Lys154, and 172 to 175 (CLKT) contribute to the NAD(+) site. Glu187, His250, and His267 together coordinate Zn(2+).

Belongs to the sugar phosphate cyclases superfamily. Dehydroquinate synthase family. The cofactor is NAD(+). Requires Co(2+) as cofactor. Zn(2+) serves as cofactor.

It localises to the cytoplasm. The catalysed reaction is 7-phospho-2-dehydro-3-deoxy-D-arabino-heptonate = 3-dehydroquinate + phosphate. The protein operates within metabolic intermediate biosynthesis; chorismate biosynthesis; chorismate from D-erythrose 4-phosphate and phosphoenolpyruvate: step 2/7. Functionally, catalyzes the conversion of 3-deoxy-D-arabino-heptulosonate 7-phosphate (DAHP) to dehydroquinate (DHQ). This is 3-dehydroquinate synthase from Buchnera aphidicola subsp. Acyrthosiphon pisum (strain APS) (Acyrthosiphon pisum symbiotic bacterium).